The sequence spans 362 residues: GDSL esterase/lipase At5g22810 (362 aa).

Positions Met1–Val28 are cleaved as a signal peptide. Ser44 functions as the Nucleophile in the catalytic mechanism. N-linked (GlcNAc...) asparagine glycans are attached at residues Asn159, Asn162, Asn264, and Asn329. Catalysis depends on residues Asp337 and His340.

Belongs to the 'GDSL' lipolytic enzyme family.

It localises to the secreted. This Arabidopsis thaliana (Mouse-ear cress) protein is GDSL esterase/lipase At5g22810.